The following is a 366-amino-acid chain: PTI1-like tyrosine-protein kinase 2 (366 aa).

Residues 8–23 are compositionally biased toward basic and acidic residues; that stretch reads GDKKGDSDLSNEEVHL. Positions 8–50 are disordered; sequence GDKKGDSDLSNEEVHLKSPWQNSEANQKNQKPQAVVKPEAQKE. Residues 26-39 show a composition bias toward polar residues; it reads PWQNSEANQKNQKP. The Protein kinase domain maps to 71–353; that stretch reads FGSKSLIGEG…IVVKALQPLL (283 aa). ATP contacts are provided by residues 77–85 and Lys-99; that span reads IGEGSYGRV. Asp-203 acts as the Proton acceptor in catalysis.

It belongs to the protein kinase superfamily. Tyr protein kinase family. Interacts with OXI1. Post-translationally, autophosphorylated and phosphorylated by OXI1.

The enzyme catalyses L-tyrosyl-[protein] + ATP = O-phospho-L-tyrosyl-[protein] + ADP + H(+). Its activity is regulated as follows. Strongly activated in response to phosphatidic acid (PA) and xylanase in a OXI1- and PDK1-dependent manner, and, to a lesser extent, by hydrogen peroxide and flagellin in a OXI1-dependent manner. Its function is as follows. Probable tyrosine-protein kinase involved in oxidative burst-mediated signaling leading to specific genes expression. This chain is PTI1-like tyrosine-protein kinase 2 (PTI12), found in Arabidopsis thaliana (Mouse-ear cress).